A 169-amino-acid chain; its full sequence is Transcription antitermination protein NusB (169 aa).

Residues 147–169 form a disordered region; that stretch reads RGLIDQSFSRPQKPESEATEIEE.

It belongs to the NusB family.

In terms of biological role, involved in transcription antitermination. Required for transcription of ribosomal RNA (rRNA) genes. Binds specifically to the boxA antiterminator sequence of the ribosomal RNA (rrn) operons. This is Transcription antitermination protein NusB from Chlorobium chlorochromatii (strain CaD3).